The chain runs to 594 residues: Developmental and secondary metabolism regulator veA (594 aa).

Positions 24–220 constitute a Velvet domain; that stretch reads GRRLFYRIDV…AEQGTRVRIR (197 aa). Positions 38 to 43 match the Nuclear localization signal motif; that stretch reads EKCRAC. Disordered regions lie at residues 40 to 59 and 210 to 558; these read CRACGSGPKSSTDRRPVDPP and MAEQ…DVEE. Over residues 217–229 the composition is skewed to basic residues; sequence VRIRRDVRMRRRD. Residues 296 to 307 are compositionally biased toward pro residues; that stretch reads APPPPNPPPPGF. Low complexity predominate over residues 327-351; it reads SHSQYQQPTSSSSSSEQVSSVPQSP. Residues 352–362 are compositionally biased toward polar residues; the sequence is AYSSHAAQQHY. A compositionally biased stretch (basic and acidic residues) spans 374 to 383; it reads PERRLSDHRS. The segment covering 384-403 has biased composition (low complexity); that stretch reads SQPNNHPQQSPHQHSYSHRS. A compositionally biased stretch (basic and acidic residues) spans 405 to 416; the sequence is PQRERFMPDSRR. The PEST stretch occupies residues 457-506; sequence VADTQATPHLPPIRWPRPNMNLPSPPSEHQEALQPLQPAPLHYESQTHQQ. The span at 523-538 shows a compositional bias: low complexity; that stretch reads YSYGYSYSHNHSHGYG.

Belongs to the velvet family. VeA subfamily. As to quaternary structure, component of the heterotrimeric velvet complex composed of LAEA, VEA and VELB; VEA acting as a bridging protein between LAEA and VELB.

It localises to the nucleus. The protein localises to the cytoplasm. Its function is as follows. Component of the velvet transcription factor complex that controls sexual/asexual developmental ratio in response to light, promoting sexual development in the darkness while stimulating asexual sporulation under illumination. The velvet complex acts as a global regulator for secondary metabolite gene expression. Regulates of the response to reactive oxygen species (ROS) stress. This chain is Developmental and secondary metabolism regulator veA, found in Pyricularia oryzae (strain 70-15 / ATCC MYA-4617 / FGSC 8958) (Rice blast fungus).